A 178-amino-acid chain; its full sequence is MEQFHGTTILSVRRGNIVALGGDGQVTLGNIVMKGTARKVRKVYNGKVLVGFAGGTADAFTLLERFESKLEKHQGHLMRASVELAKDWRTDRMLRRLEAMLLVADKETTLIITGNGDVLEPNDGIGAIGSGGTYAQSAAKALQENTDLSPEDIVKKSLTIAGELCIYTNLSHIIETLD.

The active site involves Thr7. Positions 162, 165, and 168 each coordinate Na(+).

This sequence belongs to the peptidase T1B family. HslV subfamily. As to quaternary structure, a double ring-shaped homohexamer of HslV is capped on each side by a ring-shaped HslU homohexamer. The assembly of the HslU/HslV complex is dependent on binding of ATP.

The protein localises to the cytoplasm. The enzyme catalyses ATP-dependent cleavage of peptide bonds with broad specificity.. Allosterically activated by HslU binding. Protease subunit of a proteasome-like degradation complex believed to be a general protein degrading machinery. The protein is ATP-dependent protease subunit HslV of Janthinobacterium sp. (strain Marseille) (Minibacterium massiliensis).